Here is a 135-residue protein sequence, read N- to C-terminus: ATP synthase epsilon chain (135 aa).

Residues 84–107 (SLSEEKQSEEQKQRLERAKKALSS) are disordered. Basic and acidic residues predominate over residues 86–102 (SEEKQSEEQKQRLERAK).

Belongs to the ATPase epsilon chain family. In terms of assembly, F-type ATPases have 2 components, CF(1) - the catalytic core - and CF(0) - the membrane proton channel. CF(1) has five subunits: alpha(3), beta(3), gamma(1), delta(1), epsilon(1). CF(0) has three main subunits: a, b and c.

It is found in the cell membrane. Produces ATP from ADP in the presence of a proton gradient across the membrane. The protein is ATP synthase epsilon chain of Elusimicrobium minutum (strain Pei191).